We begin with the raw amino-acid sequence, 222 residues long: Thiamine-phosphate synthase (222 aa).

4-amino-2-methyl-5-(diphosphooxymethyl)pyrimidine is bound by residues 40–44 and N81; that span reads QLRDK. Mg(2+) is bound by residues D82 and D101. Residue S120 participates in 4-amino-2-methyl-5-(diphosphooxymethyl)pyrimidine binding. 146–148 serves as a coordination point for 2-[(2R,5Z)-2-carboxy-4-methylthiazol-5(2H)-ylidene]ethyl phosphate; the sequence is TPT. Residue K149 coordinates 4-amino-2-methyl-5-(diphosphooxymethyl)pyrimidine. G178 is a binding site for 2-[(2R,5Z)-2-carboxy-4-methylthiazol-5(2H)-ylidene]ethyl phosphate.

It belongs to the thiamine-phosphate synthase family. Requires Mg(2+) as cofactor.

It carries out the reaction 2-[(2R,5Z)-2-carboxy-4-methylthiazol-5(2H)-ylidene]ethyl phosphate + 4-amino-2-methyl-5-(diphosphooxymethyl)pyrimidine + 2 H(+) = thiamine phosphate + CO2 + diphosphate. The catalysed reaction is 2-(2-carboxy-4-methylthiazol-5-yl)ethyl phosphate + 4-amino-2-methyl-5-(diphosphooxymethyl)pyrimidine + 2 H(+) = thiamine phosphate + CO2 + diphosphate. It catalyses the reaction 4-methyl-5-(2-phosphooxyethyl)-thiazole + 4-amino-2-methyl-5-(diphosphooxymethyl)pyrimidine + H(+) = thiamine phosphate + diphosphate. It functions in the pathway cofactor biosynthesis; thiamine diphosphate biosynthesis; thiamine phosphate from 4-amino-2-methyl-5-diphosphomethylpyrimidine and 4-methyl-5-(2-phosphoethyl)-thiazole: step 1/1. Condenses 4-methyl-5-(beta-hydroxyethyl)thiazole monophosphate (THZ-P) and 2-methyl-4-amino-5-hydroxymethyl pyrimidine pyrophosphate (HMP-PP) to form thiamine monophosphate (TMP). This chain is Thiamine-phosphate synthase, found in Mycobacterium tuberculosis (strain ATCC 25177 / H37Ra).